The sequence spans 391 residues: 23S rRNA (uracil(747)-C(5))-methyltransferase RlmC (391 aa).

[4Fe-4S] cluster contacts are provided by Cys5, Cys13, Cys16, and Cys95. Gln220, Phe249, Glu276, and Asn322 together coordinate S-adenosyl-L-methionine. Cys349 (nucleophile) is an active-site residue.

It belongs to the class I-like SAM-binding methyltransferase superfamily. RNA M5U methyltransferase family. RlmC subfamily.

The catalysed reaction is uridine(747) in 23S rRNA + S-adenosyl-L-methionine = 5-methyluridine(747) in 23S rRNA + S-adenosyl-L-homocysteine + H(+). Functionally, catalyzes the formation of 5-methyl-uridine at position 747 (m5U747) in 23S rRNA. This chain is 23S rRNA (uracil(747)-C(5))-methyltransferase RlmC, found in Actinobacillus pleuropneumoniae serotype 5b (strain L20).